We begin with the raw amino-acid sequence, 344 residues long: Tetraacyldisaccharide 4'-kinase (344 aa).

68-75 (TAGGNGKT) serves as a coordination point for ATP.

It belongs to the LpxK family.

The enzyme catalyses a lipid A disaccharide + ATP = a lipid IVA + ADP + H(+). It participates in glycolipid biosynthesis; lipid IV(A) biosynthesis; lipid IV(A) from (3R)-3-hydroxytetradecanoyl-[acyl-carrier-protein] and UDP-N-acetyl-alpha-D-glucosamine: step 6/6. Transfers the gamma-phosphate of ATP to the 4'-position of a tetraacyldisaccharide 1-phosphate intermediate (termed DS-1-P) to form tetraacyldisaccharide 1,4'-bis-phosphate (lipid IVA). This is Tetraacyldisaccharide 4'-kinase from Photobacterium profundum (strain SS9).